A 99-amino-acid polypeptide reads, in one-letter code: Integration host factor subunit alpha (99 aa).

The protein belongs to the bacterial histone-like protein family. As to quaternary structure, heterodimer of an alpha and a beta chain.

Its function is as follows. This protein is one of the two subunits of integration host factor, a specific DNA-binding protein that functions in genetic recombination as well as in transcriptional and translational control. The protein is Integration host factor subunit alpha of Thioalkalivibrio sulfidiphilus (strain HL-EbGR7).